Consider the following 226-residue polypeptide: Small ribosomal subunit protein uS3 (226 aa).

Residues 36 to 104 (IRKYLENRLS…KIQINIFEIK (69 aa)) form the KH type-2 domain.

Belongs to the universal ribosomal protein uS3 family. In terms of assembly, part of the 30S ribosomal subunit. Forms a tight complex with proteins S10 and S14.

Functionally, binds the lower part of the 30S subunit head. Binds mRNA in the 70S ribosome, positioning it for translation. In Karelsulcia muelleri (strain GWSS) (Sulcia muelleri), this protein is Small ribosomal subunit protein uS3.